Here is a 340-residue protein sequence, read N- to C-terminus: MVSERGLDVLRVIVQDYVSSREPVGSKSIVERHAFGVSAATIRNDMALLEEEELIAAPHTSSGRVPTDKGYRLFVDQLADVRPLTPAQRQAIHVFLGESVDLDDVLARTVRLLAQLTNQVALVQYPSLATSHVKHVELVALSTTRVLTVLITDTGRVEQRVVELAGDPDDAFLAVMRTRINQAVGGLGLAEAATRLETLSDEVEPAQRAAASVLAGTLVEQVLANRQERLLLAGSANLARTERDFPGSISPVLEAIEEQVVLLRLLGEMEADQHGVSVSIGRENAPFGLGETSVLTSGYSSSGGVLARLGVLGPTRMDYSTNMASVRAVARYLSRLLEER.

Belongs to the HrcA family.

In terms of biological role, negative regulator of class I heat shock genes (grpE-dnaK-dnaJ and groELS operons). Prevents heat-shock induction of these operons. The protein is Heat-inducible transcription repressor HrcA of Clavibacter michiganensis subsp. michiganensis (strain NCPPB 382).